The chain runs to 285 residues: NADPH-dependent 7-cyano-7-deazaguanine reductase (285 aa).

A substrate-binding site is contributed by 80–82; it reads VES. 82–83 is a binding site for NADPH; the sequence is SK. C191 (thioimide intermediate) is an active-site residue. D198 (proton donor) is an active-site residue. Residue 231–232 participates in substrate binding; the sequence is HE. 260 to 261 is an NADPH binding site; it reads RG.

This sequence belongs to the GTP cyclohydrolase I family. QueF type 2 subfamily. Homodimer.

It is found in the cytoplasm. The catalysed reaction is 7-aminomethyl-7-carbaguanine + 2 NADP(+) = 7-cyano-7-deazaguanine + 2 NADPH + 3 H(+). It functions in the pathway tRNA modification; tRNA-queuosine biosynthesis. Its function is as follows. Catalyzes the NADPH-dependent reduction of 7-cyano-7-deazaguanine (preQ0) to 7-aminomethyl-7-deazaguanine (preQ1). In Psychrobacter arcticus (strain DSM 17307 / VKM B-2377 / 273-4), this protein is NADPH-dependent 7-cyano-7-deazaguanine reductase.